Reading from the N-terminus, the 1258-residue chain is Serine/threonine-protein kinase Nek1 (1258 aa).

The 255-residue stretch at 4–258 folds into the Protein kinase domain; that stretch reads YVRLQKIGEG…VNSILEKGFI (255 aa). ATP contacts are provided by residues 10-18 and lysine 33; that span reads IGEGSFGKA. The active-site Proton acceptor is the aspartate 128. Threonine 156 is subject to Phosphothreonine. Threonine 162 is modified (phosphothreonine; by autocatalysis). The segment at 330–360 is disordered; it reads HEKKPLQKHKQAHQTPEKRVNTGEERRKISE. Positions 344-360 are enriched in basic and acidic residues; that stretch reads TPEKRVNTGEERRKISE. Serine 414, serine 418, serine 428, and serine 438 each carry phosphoserine. Disordered regions lie at residues 578 to 600, 648 to 669, and 685 to 704; these read KLRGEKKEANHSEGQEGSEEADM, KSSDVSPPLGQHETGGSPSKQQ, and VDSSLTDTRETSEEMQKTNN. A compositionally biased stretch (basic and acidic residues) spans 579–591; sequence LRGEKKEANHSEG. Serine 653 bears the Phosphoserine mark. Residue threonine 661 is modified to Phosphothreonine. Serine 664 carries the phosphoserine modification. A compositionally biased stretch (basic and acidic residues) spans 691–700; it reads DTRETSEEMQ. Serine 798, serine 834, serine 868, serine 881, serine 1052, and serine 1126 each carry phosphoserine. A disordered region spans residues 1118 to 1171; it reads REQPGEEYSEEEESVLKNSDVEPTANGTDVADEDDNPSSESALNEEWHSDNSDG.

The protein belongs to the protein kinase superfamily. NEK Ser/Thr protein kinase family. NIMA subfamily. As to quaternary structure, binds to CBY2. Found in a complex with CFAP410, NEK1 and SPATA7. Interacts with CFAP410. Interacts (via Ser-1052 phosphorylated form) with 14-3-3 proteins. The cofactor is Mg(2+). High fetal expression in the brain and kidney.

The protein localises to the nucleus. It localises to the cytoplasm. Its subcellular location is the cytoskeleton. The protein resides in the microtubule organizing center. It is found in the centrosome. The enzyme catalyses L-seryl-[protein] + ATP = O-phospho-L-seryl-[protein] + ADP + H(+). It carries out the reaction L-threonyl-[protein] + ATP = O-phospho-L-threonyl-[protein] + ADP + H(+). Its function is as follows. Phosphorylates serines and threonines, but also appears to possess tyrosine kinase activity. Involved in DNA damage checkpoint control and for proper DNA damage repair. In response to injury that includes DNA damage, NEK1 phosphorylates VDAC1 to limit mitochondrial cell death. May be implicated in the control of meiosis. Involved in cilium assembly. This chain is Serine/threonine-protein kinase Nek1 (NEK1), found in Homo sapiens (Human).